A 541-amino-acid polypeptide reads, in one-letter code: Probable inorganic phosphate transporter 1-12 (541 aa).

Residues 1–26 (MGRQDQQLQVLNALDAAKTQWYHFTA) lie on the Cytoplasmic side of the membrane. The chain crosses the membrane as a helical span at residues 27–47 (IIVAGMGFFTDAYDLFCISLV). Residues 48–70 (TKLLGRIYYTDPASPTPGSLPPN) lie on the Extracellular side of the membrane. The chain crosses the membrane as a helical span at residues 71–91 (IAAAVNGVALCGTLSGQLFFG). Residues 92–100 (WLGDKLGRK) are Cytoplasmic-facing. A helical membrane pass occupies residues 101 to 121 (SVYGMTLLLMVICSIASGLSF). Over 122 to 124 (SHT) the chain is Extracellular. A helical transmembrane segment spans residues 125–145 (PTSVMATLCFFRFWLGFGIGG). Over 146-163 (DYPLSATIMSEYANKKTR) the chain is Cytoplasmic. The chain crosses the membrane as a helical span at residues 164–184 (GAFIAAVFAMQGFGILAGGVV). At 185–213 (TLAMSAGFQAAFPAPAYEVNAAASTVPQA) the chain is on the extracellular side. Residues 214–234 (DYVWRIILMLGALPAILTYYW) form a helical membrane-spanning segment. Residues 235-297 (RMKMPETARY…ARFAKRHGAH (63 aa)) lie on the Cytoplasmic side of the membrane. The chain crosses the membrane as a helical span at residues 298-318 (LLGTAATWFLVDVAYYSQNLF). The Extracellular portion of the chain corresponds to 319-349 (QKDIFTSIHWIPKARTMSELEEVFRISRAQT). A helical membrane pass occupies residues 350 to 370 (LIALCGTVPGYWFTVFLIDII). Topologically, residues 371–374 (GRFK) are cytoplasmic. Residues 375–395 (IQLLGFAGMTAFMLGLAIPYH) form a helical membrane-spanning segment. Residues 396-403 (HWTMPGNQ) lie on the Extracellular side of the membrane. The chain crosses the membrane as a helical span at residues 404-424 (VIFVFLYGFTFFFANFGPNAT). At 425–443 (TFIVPAEIFPARLRSTCHG) the chain is on the cytoplasmic side. The helical transmembrane segment at 444–464 (ISAASGKAGAIIGAFGFLYAA) threads the bilayer. Topologically, residues 465–484 (QPQDKAHVDAGYKPGIGVRN) are extracellular. Residues 485-505 (ALFVLAGCNLVGFLMTWMLVP) traverse the membrane as a helical segment. At 506-541 (ESKGKSLEEMSGEADDEEASANGGATAVNSSGVEMV) the chain is on the cytoplasmic side. The disordered stretch occupies residues 512-541 (LEEMSGEADDEEASANGGATAVNSSGVEMV). A compositionally biased stretch (acidic residues) spans 515–524 (MSGEADDEEA). The segment covering 532–541 (AVNSSGVEMV) has biased composition (polar residues).

The protein belongs to the major facilitator superfamily. Phosphate:H(+) symporter (TC 2.A.1.9) family.

It localises to the membrane. In terms of biological role, high-affinity transporter for external inorganic phosphate. In Oryza sativa subsp. japonica (Rice), this protein is Probable inorganic phosphate transporter 1-12 (PHT1-12).